A 274-amino-acid polypeptide reads, in one-letter code: Lectizyme (274 aa).

Residues 1–16 (MKFFAVFALCVASVSA) form the signal peptide. The region spanning 32 to 268 (IINGHEAEKG…FDKWIEDSIE (237 aa)) is the Peptidase S1 domain. Cysteines 57 and 73 form a disulfide. Catalysis depends on charge relay system residues His-72 and Asp-119. Intrachain disulfides connect Cys-188/Cys-204 and Cys-215/Cys-244. Ser-219 functions as the Charge relay system in the catalytic mechanism.

The protein belongs to the peptidase S1 family. In terms of tissue distribution, expressed in the midgut.

It is found in the secreted. Protein with lectin and protease activity involved in the establishment of trypanosome infections in tsetse flies. Binds D-glucosamine and agglutinates bloodstream-form trypanosomes and rabbit red blood cells. Capable of inducing transformation of bloodstream-form trypanosomes into procyclic (midgut) forms in vitro. The polypeptide is Lectizyme (Gpl) (Glossina austeni (Savannah tsetse fly)).